A 229-amino-acid chain; its full sequence is Casparian strip membrane protein 1 (229 aa).

Residues 1-67 (MSTSEAGAAA…FRRADRGSRC (67 aa)) are Cytoplasmic-facing. Residues 68-88 (VALLDFVLRVAAFGPALAAAI) traverse the membrane as a helical segment. Over 89–115 (ATGTSDETLSVFTQFFQFHARFDDFPA) the chain is Extracellular. Residues 116 to 136 (LLFFMVANAIAAGYLVLSLPF) form a helical membrane-spanning segment. At 137–157 (SAVIVLRPQAIGLRHLLLVCD) the chain is on the cytoplasmic side. Residues 158–178 (MIIAALLTAAAAAAAAIVDLA) traverse the membrane as a helical segment. Residues 179–205 (HSGNLRANWVPICMQFHGFCQRTSGAV) are Extracellular-facing. Residues 206–226 (VGSFLAVLVLLFLVILAAFAI) form a helical membrane-spanning segment. At 227-229 (RKR) the chain is on the cytoplasmic side.

The protein belongs to the Casparian strip membrane proteins (CASP) family. In terms of assembly, homodimer and heterodimers.

The protein resides in the cell membrane. In terms of biological role, regulates membrane-cell wall junctions and localized cell wall deposition. Required for establishment of the Casparian strip membrane domain (CSD) and the subsequent formation of Casparian strips, a cell wall modification of the root endodermis that determines an apoplastic barrier between the intraorganismal apoplasm and the extraorganismal apoplasm and prevents lateral diffusion. The sequence is that of Casparian strip membrane protein 1 from Sorghum bicolor (Sorghum).